Consider the following 202-residue polypeptide: Small heat shock protein hspG5 (202 aa).

The region spanning 31-202 (KTIIDIIPPM…YSNTIKININ (172 aa)) is the sHSP domain. The disordered stretch occupies residues 96–138 (TSSTTLDSKEDEASIEEFEDDIKPKSKSTVTTTATKENKEDEN).

Belongs to the small heat shock protein (HSP20) family.

This chain is Small heat shock protein hspG5 (hspG5), found in Dictyostelium discoideum (Social amoeba).